The following is a 1684-amino-acid chain: A-kinase anchor protein 12 (1684 aa).

The segment at 1–124 is disordered; the sequence is MGAGSSTEQR…DITKDEQEET (124 aa). A lipid anchor (N-myristoyl glycine) is attached at Gly2. Ser11, Ser18, Ser22, and Ser27 each carry phosphoserine. Residues 30 to 48 are compositionally biased toward low complexity; the sequence is GPAAEASGAAGDPADADPA. A compositionally biased stretch (acidic residues) spans 75-86; that stretch reads ESQDGQEEEVTV. A compositionally biased stretch (basic and acidic residues) spans 89 to 105; sequence VGQRESEDVKEKDRAKE. Position 136 is a phosphoserine (Ser136). Disordered stretches follow at residues 175–281 and 296–353; these read SDTV…ETTS and KKTS…SADY. Residues 212–227 show a composition bias toward basic and acidic residues; it reads ASKESELKQSTEKQEG. A compositionally biased stretch (polar residues) spans 228–247; it reads TLKQAQSSTEIPLQAESGQG. Phosphoserine is present on residues Ser234 and Ser244. Basic and acidic residues predominate over residues 251–266; that stretch reads EAAKDGEENREKEPTK. The involved in PKC-binding stretch occupies residues 253–543; it reads AKDGEENREK…QHIQTESPES (291 aa). A phosphoserine mark is found at Ser270 and Ser273. Residues 270-281 show a composition bias toward polar residues; sequence SPTSPVSNETTS. Over residues 302–320 the composition is skewed to basic and acidic residues; the sequence is KPKEDDLETSEKRKEQEAE. Positions 321 to 342 are enriched in acidic residues; that stretch reads KVDEEEGEKTEPAPAEEQEPAE. Thr330 carries the phosphothreonine modification. Position 350 is a phosphoserine (Ser350). At Tyr353 the chain carries Phosphotyrosine. A phosphoserine mark is found at Ser371 and Ser467. Positions 421–479 are disordered; sequence GSGESLPPEKLAETQEVPQEAEPVEELMKTKEVCVSGGDHTQLTDLSPEEKMLPKHPEG. Residues 468–478 show a composition bias toward basic and acidic residues; the sequence is PEEKMLPKHPE. 3 positions are modified to phosphoserine: Ser489, Ser505, and Ser507. The disordered stretch occupies residues 492 to 825; it reads RIKVQGSPLK…INEDDPDVPA (334 aa). Positions 497–511 are enriched in low complexity; the sequence is GSPLKKLFSSSGLKK. Residues 512 to 521 show a composition bias toward basic residues; the sequence is LSGKKQKGKR. 6 positions are modified to phosphoserine: Ser540, Ser543, Ser584, Ser598, Ser613, and Ser615. The AKAP CaM-binding 1 motif lies at 593-613; sequence ITPWASFKKMVTPKKRVRRPS. Residues 611–625 show a composition bias toward basic and acidic residues; it reads RPSESDKEEELDKVK. The span at 626-637 shows a compositional bias: low complexity; sequence SATLSSTESTAS. At Thr628 the chain carries Phosphothreonine. Phosphoserine occurs at positions 630, 631, 634, and 637. A compositionally biased stretch (basic and acidic residues) spans 641–660; the sequence is DEVRAVGEEQRSEEPKRRVD. Ser682, Ser683, and Ser684 each carry phosphoserine. A compositionally biased stretch (basic and acidic residues) spans 696-710; sequence DGHRAEEASKDKEAD. Residues 714-723 show a composition bias toward polar residues; the sequence is ASTQEQDQAH. The segment covering 724–741 has biased composition (low complexity); it reads GSSSPEPAGSPSEGEGVS. A phosphoserine mark is found at Ser733, Ser745, Ser767, and Ser786. The AKAP CaM-binding 2 motif lies at 740–760; that stretch reads VSTWESFKRLVTPRKKSKSKL. The AKAP CaM-binding 3 signature appears at 781–801; that stretch reads EESWVSIKKFIPGRRKKRADG. Position 871 is a phosphothreonine (Thr871). Ser873 bears the Phosphoserine mark. A disordered region spans residues 970-1001; the sequence is TEASGAEETTDMVSAVSQLSDSPDTTEEATPV. Positions 980–992 are enriched in polar residues; the sequence is DMVSAVSQLSDSP. A Glycyl lysine isopeptide (Lys-Gly) (interchain with G-Cter in SUMO1) cross-link involves residue Lys1030. Disordered stretches follow at residues 1055–1106, 1121–1211, 1232–1365, and 1391–1492; these read VEED…VTED, LMEQ…DVLE, EGEA…DKAD, and TVAT…REKI. Phosphoserine is present on Ser1059. Positions 1130 to 1176 are enriched in polar residues; sequence SSETLTDSETNGSTPLADSDTPNGTQQDETVDSQDSNAIAAVKQSQV. 2 stretches are compositionally biased toward basic and acidic residues: residues 1198 to 1210 and 1239 to 1254; these read QEEH…RDVL and DGEK…ELEV. Residue Ser1292 is modified to Phosphoserine. Residues 1293 to 1331 show a composition bias toward basic and acidic residues; sequence PEKREMGTDVEKEETETKTEQASEEHEQETAAPEHEGTH. Ser1351, Ser1355, and Ser1357 each carry phosphoserine. Over residues 1467 to 1492 the composition is skewed to basic and acidic residues; that stretch reads QRSDEDNKPDAGPDAAGKESAAREKI. Positions 1501-1514 are RII-binding; it reads ELESKSNKIVQSVI. Residues Ser1546 and Ser1645 each carry the phosphoserine modification. A disordered region spans residues 1568 to 1684; that stretch reads TLSAVAQEGL…QEPKGDLTES (117 aa). Residues 1653-1684 are compositionally biased toward basic and acidic residues; sequence LTEEGDALKEEMNKAQTEEDDLQEPKGDLTES.

Binds to dimeric RII-alpha regulatory subunit of PKC. As to expression, isoform 1 is predominantly found in the nervous system. Isoform 3 is testis specific.

The protein resides in the cytoplasm. The protein localises to the cytoskeleton. It localises to the membrane. Functionally, anchoring protein that mediates the subcellular compartmentation of protein kinase A (PKA) and protein kinase C (PKC). This chain is A-kinase anchor protein 12 (Akap12), found in Mus musculus (Mouse).